A 227-amino-acid polypeptide reads, in one-letter code: LexA repressor (227 aa).

Positions 26 to 46 (FDEMKEALDLASKSGIHRLIT) form a DNA-binding region, H-T-H motif. Catalysis depends on for autocatalytic cleavage activity residues serine 147 and lysine 185.

This sequence belongs to the peptidase S24 family. As to quaternary structure, homodimer.

The enzyme catalyses Hydrolysis of Ala-|-Gly bond in repressor LexA.. Its function is as follows. Represses a number of genes involved in the response to DNA damage (SOS response), including recA and lexA. In the presence of single-stranded DNA, RecA interacts with LexA causing an autocatalytic cleavage which disrupts the DNA-binding part of LexA, leading to derepression of the SOS regulon and eventually DNA repair. In Hyphomonas neptunium (strain ATCC 15444), this protein is LexA repressor.